We begin with the raw amino-acid sequence, 278 residues long: Ferredoxin--NADP reductase A (278 aa).

The FAD-binding FR-type domain occupies 3 to 103 (PGYTEETVLE…KRATGTLTIG (101 aa)). Residues 52-55 (RAYS) and T118 contribute to the FAD site.

This sequence belongs to the ferredoxin--NADP reductase type 1 family. The cofactor is FAD.

The catalysed reaction is 2 reduced [4Fe-4S]-[ferredoxin] + NADP(+) + H(+) = 2 oxidized [4Fe-4S]-[ferredoxin] + NADPH. Its function is as follows. Transports electrons between NADPH and ferredoxin. Can transfer electrons to ferredoxins Fdx2 and Fdx8. Prefers NADPH to NADH. The polypeptide is Ferredoxin--NADP reductase A (Sorangium cellulosum (strain So ce56) (Polyangium cellulosum (strain So ce56))).